A 431-amino-acid chain; its full sequence is MESTPPYHRSNTKSASRLQDSSNPPNLSLDLVLSSPNTPNPSSPVPLRDILLLPPSPLRKSRTRLSDRLEMTSEDAMAVVRKRGKGKGGQKSLLASPRNPRRSRRRSEAVEEKEANLVIEEIVKLPPRKRKTNGRPKKDKQSSAPPLCSSSDLPNTCQSDLNLIGEIISDLVMWRDVAKSTLWFGFGCLSFLSSCFAKGVNFSVFSAVSNLGLVLLCGSFLSNTLCQRKNEDTKRAFHVSEDDVLRSARRVLPATNFFISKTSELFSGEPSMTLKVTPFLLLGAEYGHLITLWRLSAFGFFLSFTIPKLYSCYTHQISQKVERVKTRIGEAWGVCSHKKILAGSAVTAFWNLTSIRTRIFAVFIILVIFRYRRQNLQLTPEEVEPVENEQEEETLPQEEETVPQEEETVPQEEEQTQPSEERALVVVVAET.

Disordered stretches follow at residues 1 to 110 (MEST…SEAV) and 126 to 152 (PPRK…SSSD). The span at 12–26 (TKSASRLQDSSNPPN) shows a compositional bias: polar residues. Residues 126–138 (PPRKRKTNGRPKK) are compositionally biased toward basic residues. The segment covering 142-152 (SSAPPLCSSSD) has biased composition (polar residues). In terms of domain architecture, Reticulon spans 168 to 355 (ISDLVMWRDV…VTAFWNLTSI (188 aa)). 4 consecutive transmembrane segments (helical) span residues 177-197 (VAKS…SCFA), 202-222 (FSVF…SFLS), 286-306 (YGHL…SFTI), and 349-369 (FWNL…LVIF). The span at 382-415 (EVEPVENEQEEETLPQEEETVPQEEETVPQEEEQ) shows a compositional bias: acidic residues. The interval 382 to 422 (EVEPVENEQEEETLPQEEETVPQEEETVPQEEEQTQPSEER) is disordered.

Its subcellular location is the endoplasmic reticulum membrane. This is Reticulon-like protein B17 (RTNLB17) from Arabidopsis thaliana (Mouse-ear cress).